The primary structure comprises 231 residues: SrfA-induced gene F protein (231 aa).

The protein is SrfA-induced gene F protein (sigF) of Dictyostelium discoideum (Social amoeba).